A 141-amino-acid chain; its full sequence is Hemoglobin subunit alpha-A (141 aa).

The Globin domain occupies V1–R141. Residue H58 participates in O2 binding. H87 provides a ligand contact to heme b.

This sequence belongs to the globin family. Heterotetramer of two alpha chains and two beta chains. In terms of tissue distribution, red blood cells.

Functionally, involved in oxygen transport from the lung to the various peripheral tissues. The protein is Hemoglobin subunit alpha-A (HBAA) of Turdus merula (Common blackbird).